Reading from the N-terminus, the 70-residue chain is Small ribosomal subunit protein bS21B (70 aa).

The protein belongs to the bacterial ribosomal protein bS21 family.

This Rhizobium meliloti (strain 1021) (Ensifer meliloti) protein is Small ribosomal subunit protein bS21B (rpsU2).